The primary structure comprises 126 residues: Large ribosomal subunit protein bL17 (126 aa).

This sequence belongs to the bacterial ribosomal protein bL17 family. As to quaternary structure, part of the 50S ribosomal subunit. Contacts protein L32.

The polypeptide is Large ribosomal subunit protein bL17 (Xylella fastidiosa (strain Temecula1 / ATCC 700964)).